The chain runs to 83 residues: MRLALLLLAILVATELVVSGKNPILQCMGNRGFCRSSCKKSEQAYFYCRTFQMCCLQSYVRISLTGVDDNTNWSYEKHWPRIP.

Residues 1–19 (MRLALLLLAILVATELVVS) form the signal peptide. Disulfide bonds link Cys27/Cys54, Cys34/Cys48, and Cys38/Cys55.

It belongs to the beta-defensin family. Specifically expressed in male gonads (Sertoli cells).

The protein localises to the secreted. Its function is as follows. Has antibacterial activity. The sequence is that of Beta-defensin 19 (Defb19) from Mus musculus (Mouse).